Here is a 350-residue protein sequence, read N- to C-terminus: D-alanine--D-alanine ligase (350 aa).

The 202-residue stretch at 133–334 (NDIFELNKIP…VSEVFDNLIG (202 aa)) folds into the ATP-grasp domain. 161-216 (FEKTSKAVYVKPCNAGSSVGVMRAETEEELEKAIQNAFQYDRRILVEEEIIGPELQ) lines the ATP pocket. Mg(2+)-binding residues include aspartate 288, glutamate 300, and asparagine 302.

The protein belongs to the D-alanine--D-alanine ligase family. Mg(2+) serves as cofactor. Mn(2+) is required as a cofactor.

It localises to the cytoplasm. The enzyme catalyses 2 D-alanine + ATP = D-alanyl-D-alanine + ADP + phosphate + H(+). It functions in the pathway cell wall biogenesis; peptidoglycan biosynthesis. In terms of biological role, cell wall formation. This chain is D-alanine--D-alanine ligase, found in Finegoldia magna (strain ATCC 29328 / DSM 20472 / WAL 2508) (Peptostreptococcus magnus).